A 480-amino-acid chain; its full sequence is Heparin cofactor 2 (480 aa).

Positions 1-19 are cleaved as a signal peptide; sequence MQHRPHLLLISLTIMSVCG. Residue N32 is glycosylated (N-linked (GlcNAc...) asparagine). 2 repeat units span residues 56–66 and 70–80. Residues 56 to 80 are 2 X 11 AA approximate repeats, Asp/Glu-rich (acidic) (hirudin-like); the sequence is GEEDDDYLDLEKLLSEDDDYIDIID. A sulfotyrosine mark is found at Y62 and Y75. N-linked (GlcNAc...) asparagine glycosylation is present at N169. Positions 173-193 are glycosaminoglycan-binding site; the sequence is KYEILTIHNLFRKLTHRLFRR. N-linked (GlcNAc...) asparagine glycans are attached at residues N368 and N404.

The protein belongs to the serpin family. In terms of processing, N-glycosylated; different glycan composition appears to lead to two forms of this protein (56 and 60 kDa).

Its function is as follows. Thrombin inhibitor activated by the glycosaminoglycans, heparin or dermatan sulfate. In the presence of the latter, HC-II becomes the predominant thrombin inhibitor in place of antithrombin III (AT). The polypeptide is Heparin cofactor 2 (SERPIND1) (Oryctolagus cuniculus (Rabbit)).